Here is a 262-residue protein sequence, read N- to C-terminus: Acyl-[acyl-carrier-protein]--UDP-N-acetylglucosamine O-acyltransferase (262 aa).

Belongs to the transferase hexapeptide repeat family. LpxA subfamily. In terms of assembly, homotrimer.

It localises to the cytoplasm. It catalyses the reaction a (3R)-hydroxyacyl-[ACP] + UDP-N-acetyl-alpha-D-glucosamine = a UDP-3-O-[(3R)-3-hydroxyacyl]-N-acetyl-alpha-D-glucosamine + holo-[ACP]. It functions in the pathway glycolipid biosynthesis; lipid IV(A) biosynthesis; lipid IV(A) from (3R)-3-hydroxytetradecanoyl-[acyl-carrier-protein] and UDP-N-acetyl-alpha-D-glucosamine: step 1/6. Functionally, involved in the biosynthesis of lipid A, a phosphorylated glycolipid that anchors the lipopolysaccharide to the outer membrane of the cell. The chain is Acyl-[acyl-carrier-protein]--UDP-N-acetylglucosamine O-acyltransferase from Salmonella dublin (strain CT_02021853).